The following is a 262-amino-acid chain: 14-3-3 protein epsilon (262 aa).

The segment at 236–262 is disordered; it reads QAEEVDPNAGDGEPKEQIQDVEDQDVS. At Ser-262 the chain carries Phosphoserine.

Belongs to the 14-3-3 family. Homodimer. Interacts with phosphorylated yki. Interacts with pav (when serine phosphorylated); the interaction is necessary for association of the complex pav-14-3-3epsilon complex to the microtubules, thereby inhibiting microtubule sliding.

Positively regulates Ras-mediated pathways. Acts downstream or parallel to Raf, but upstream of nuclear factors in Ras signaling. Three mutants have been isolated, that suppress the rough eye phenotype caused by mutated Ras1 (sev-Ras1 v12). Inhibits yki activity by restricting its nuclear localization. Together with pav, has a role in the inhibition of microtubule sliding during neurite outgrowth. The sequence is that of 14-3-3 protein epsilon (14-3-3epsilon) from Drosophila melanogaster (Fruit fly).